An 888-amino-acid polypeptide reads, in one-letter code: Translation initiation factor IF-2 (888 aa).

Disordered stretches follow at residues 96–122 and 158–302; these read TTKQ…EAPE and ELKE…SAPT. 2 stretches are compositionally biased toward basic and acidic residues: residues 98–114 and 158–167; these read KQDE…EDVS and ELKEKQEKRR. Residues 181 to 206 show a composition bias toward polar residues; the sequence is TQVQEPGSETAAVSGSVAATQPESTE. Residues 207–225 are compositionally biased toward low complexity; the sequence is TAAVTPSATITVTTQTTPA. Composition is skewed to basic and acidic residues over residues 226-243 and 253-269; these read AKER…EKGE and EAWK…KARG. Residues 390–559 enclose the tr-type G domain; the sequence is SRAPVVTVMG…LLQAEVLELK (170 aa). The G1 stretch occupies residues 399-406; the sequence is GHVDHGKT. Residue 399 to 406 participates in GTP binding; sequence GHVDHGKT. Positions 424 to 428 are G2; it reads GITQH. The segment at 445 to 448 is G3; it reads DTPG. Residues 445 to 449 and 499 to 502 each bind GTP; these read DTPGH and NKMD. Residues 499-502 form a G4 region; that stretch reads NKMD. Residues 535–537 form a G5 region; the sequence is SAK.

The protein belongs to the TRAFAC class translation factor GTPase superfamily. Classic translation factor GTPase family. IF-2 subfamily.

It is found in the cytoplasm. Its function is as follows. One of the essential components for the initiation of protein synthesis. Protects formylmethionyl-tRNA from spontaneous hydrolysis and promotes its binding to the 30S ribosomal subunits. Also involved in the hydrolysis of GTP during the formation of the 70S ribosomal complex. The sequence is that of Translation initiation factor IF-2 from Nitrosomonas eutropha (strain DSM 101675 / C91 / Nm57).